Consider the following 77-residue polypeptide: uncharacterized protein (77 aa).

The protein to E.coli YdfK.

This is an uncharacterized protein from Escherichia coli (strain K12).